The following is a 450-amino-acid chain: 23S rRNA (uracil(1939)-C(5))-methyltransferase RlmD (450 aa).

[4Fe-4S] cluster is bound by residues C81, C87, C90, and C173. Positions 276, 305, 310, 326, 353, and 372 each coordinate S-adenosyl-L-methionine. The active-site Nucleophile is C402.

Belongs to the class I-like SAM-binding methyltransferase superfamily. RNA M5U methyltransferase family. RlmD subfamily.

The catalysed reaction is uridine(1939) in 23S rRNA + S-adenosyl-L-methionine = 5-methyluridine(1939) in 23S rRNA + S-adenosyl-L-homocysteine + H(+). Catalyzes the formation of 5-methyl-uridine at position 1939 (m5U1939) in 23S rRNA. This Idiomarina loihiensis (strain ATCC BAA-735 / DSM 15497 / L2-TR) protein is 23S rRNA (uracil(1939)-C(5))-methyltransferase RlmD.